The primary structure comprises 158 residues: Transcription elongation factor GreA (158 aa).

A coiled-coil region spans residues 4-70 (QKQYPMTQEG…IEQDIQRIEH (67 aa)).

This sequence belongs to the GreA/GreB family.

In terms of biological role, necessary for efficient RNA polymerase transcription elongation past template-encoded arresting sites. The arresting sites in DNA have the property of trapping a certain fraction of elongating RNA polymerases that pass through, resulting in locked ternary complexes. Cleavage of the nascent transcript by cleavage factors such as GreA or GreB allows the resumption of elongation from the new 3'terminus. GreA releases sequences of 2 to 3 nucleotides. The polypeptide is Transcription elongation factor GreA (Staphylococcus aureus (strain Mu3 / ATCC 700698)).